The chain runs to 341 residues: tRNA N6-adenosine threonylcarbamoyltransferase (341 aa).

Positions 111 and 115 each coordinate Fe cation. Substrate-binding positions include 133–137, Asp-166, Gly-179, Asp-183, and Asn-271; that span reads VVSGG. Asp-299 contacts Fe cation.

This sequence belongs to the KAE1 / TsaD family. It depends on Fe(2+) as a cofactor.

Its subcellular location is the cytoplasm. It carries out the reaction L-threonylcarbamoyladenylate + adenosine(37) in tRNA = N(6)-L-threonylcarbamoyladenosine(37) in tRNA + AMP + H(+). Required for the formation of a threonylcarbamoyl group on adenosine at position 37 (t(6)A37) in tRNAs that read codons beginning with adenine. Is involved in the transfer of the threonylcarbamoyl moiety of threonylcarbamoyl-AMP (TC-AMP) to the N6 group of A37, together with TsaE and TsaB. TsaD likely plays a direct catalytic role in this reaction. In Fusobacterium nucleatum subsp. nucleatum (strain ATCC 25586 / DSM 15643 / BCRC 10681 / CIP 101130 / JCM 8532 / KCTC 2640 / LMG 13131 / VPI 4355), this protein is tRNA N6-adenosine threonylcarbamoyltransferase.